Here is a 400-residue protein sequence, read N- to C-terminus: Enoyl-[acyl-carrier-protein] reductase [NADH] (400 aa).

Residues 48-53, 74-75, 111-112, and 139-140 contribute to the NAD(+) site; these read GSSSGY, FE, DA, and LA. Tyrosine 225 is a substrate binding site. The active-site Proton donor is the tyrosine 235. NAD(+)-binding positions include lysine 244 and 273–275; that span reads VVT.

The protein belongs to the TER reductase family. In terms of assembly, monomer.

It carries out the reaction a 2,3-saturated acyl-[ACP] + NAD(+) = a (2E)-enoyl-[ACP] + NADH + H(+). Its pathway is lipid metabolism; fatty acid biosynthesis. In terms of biological role, involved in the final reduction of the elongation cycle of fatty acid synthesis (FAS II). Catalyzes the reduction of a carbon-carbon double bond in an enoyl moiety that is covalently linked to an acyl carrier protein (ACP). The protein is Enoyl-[acyl-carrier-protein] reductase [NADH] of Shewanella woodyi (strain ATCC 51908 / MS32).